The primary structure comprises 379 residues: MKILRKNHPLLKIVNHSFIDLPTPSNISSWWNFGSLLGMCLVIQILTGLFLAMHYTSDTTTAFSSVAHICRDVNYGWLIRYLHANGASMFFICLFIHVGRGIYYGSYVLSETWNIGIILLLTTMATAFVGYVLPWGQMSFWGATVITNLLSAIPYIGNTLVEWIWGGFSVDKATLTRFFAFHFILPFIIAAFALVHLLFLHETGSNNPSGLNSDSDKIPFHPYYTTKDLLGIFLLLLVLMILALFFPDVLGDPDNFTPANPLNTPAHIKPEWYFLFAYAILRSIPNKLGGVLALVLSILILATFPLLNTSKQHGLIFRPVTQVIYWIFIANLLVLTWIGGQPVEYPFTTIGQIASITYFTIIIILIPVSNTIENNIIKL.

The next 4 membrane-spanning stretches (helical) occupy residues 33–53 (FGSLLGMCLVIQILTGLFLAM), 77–98 (WLIRYLHANGASMFFICLFIHV), 113–133 (WNIGIILLLTTMATAFVGYVL), and 178–198 (FFAFHFILPFIIAAFALVHLL). Heme b-binding residues include His83 and His97. His182 and His196 together coordinate heme b. His201 is a binding site for a ubiquinone. Helical transmembrane passes span 226–246 (TKDLLGIFLLLLVLMILALFF), 288–308 (LGGVLALVLSILILATFPLLN), 320–340 (VTQVIYWIFIANLLVLTWIGG), and 347–367 (FTTIGQIASITYFTIIIILIP).

Belongs to the cytochrome b family. In terms of assembly, the cytochrome bc1 complex contains 11 subunits: 3 respiratory subunits (MT-CYB, CYC1 and UQCRFS1), 2 core proteins (UQCRC1 and UQCRC2) and 6 low-molecular weight proteins (UQCRH/QCR6, UQCRB/QCR7, UQCRQ/QCR8, UQCR10/QCR9, UQCR11/QCR10 and a cleavage product of UQCRFS1). This cytochrome bc1 complex then forms a dimer. The cofactor is heme b.

Its subcellular location is the mitochondrion inner membrane. Component of the ubiquinol-cytochrome c reductase complex (complex III or cytochrome b-c1 complex) that is part of the mitochondrial respiratory chain. The b-c1 complex mediates electron transfer from ubiquinol to cytochrome c. Contributes to the generation of a proton gradient across the mitochondrial membrane that is then used for ATP synthesis. This Akodon mystax (Caparao grass mouse) protein is Cytochrome b (MT-CYB).